The following is a 177-amino-acid chain: Dual-action ribosomal maturation protein DarP (177 aa).

The tract at residues 1 to 26 (MKIVGDSEHFKQPYDSDEEYVSKTED) is disordered.

This sequence belongs to the DarP family.

Its subcellular location is the cytoplasm. Its function is as follows. Member of a network of 50S ribosomal subunit biogenesis factors which assembles along the 30S-50S interface, preventing incorrect 23S rRNA structures from forming. Promotes peptidyl transferase center (PTC) maturation. The chain is Dual-action ribosomal maturation protein DarP from Shewanella sp. (strain ANA-3).